A 181-amino-acid chain; its full sequence is Large ribosomal subunit protein uL6 (181 aa).

The protein belongs to the universal ribosomal protein uL6 family. As to quaternary structure, part of the 50S ribosomal subunit.

Functionally, this protein binds to the 23S rRNA, and is important in its secondary structure. It is located near the subunit interface in the base of the L7/L12 stalk, and near the tRNA binding site of the peptidyltransferase center. This is Large ribosomal subunit protein uL6 from Desulforudis audaxviator (strain MP104C).